The primary structure comprises 336 residues: NADH-quinone oxidoreductase subunit H (336 aa).

The next 8 membrane-spanning stretches (helical) occupy residues 17–37 (WFII…TYAI), 85–105 (ALFT…LAVM), 116–136 (LGIG…GVIT), 154–174 (AAQM…IVLL), 190–210 (VWNI…AQAE), 247–267 (VYMF…WLPI), 274–294 (IPGI…QFWI), and 309–329 (FAWK…AVVV).

The protein belongs to the complex I subunit 1 family. NDH-1 is composed of 14 different subunits. Subunits NuoA, H, J, K, L, M, N constitute the membrane sector of the complex.

Its subcellular location is the cell membrane. It catalyses the reaction a quinone + NADH + 5 H(+)(in) = a quinol + NAD(+) + 4 H(+)(out). Its function is as follows. NDH-1 shuttles electrons from NADH, via FMN and iron-sulfur (Fe-S) centers, to quinones in the respiratory chain. The immediate electron acceptor for the enzyme in this species is believed to be ubiquinone. Couples the redox reaction to proton translocation (for every two electrons transferred, four hydrogen ions are translocated across the cytoplasmic membrane), and thus conserves the redox energy in a proton gradient. This subunit may bind ubiquinone. This is NADH-quinone oxidoreductase subunit H from Brevibacillus brevis (strain 47 / JCM 6285 / NBRC 100599).